The primary structure comprises 551 residues: Delta-selinene synthase TPS7FN (551 aa).

Positions 266, 303, 307, 444, and 447 each coordinate (2E,6E)-farnesyl diphosphate. 2 residues coordinate Mg(2+): Asp-303 and Asp-307. A DDXXD motif motif is present at residues 303–307 (DDIYD). Residues Asp-447, Ser-451, and Glu-455 each coordinate Mg(2+).

Belongs to the terpene synthase family. Tpsb subfamily. Requires Mg(2+) as cofactor. Mn(2+) is required as a cofactor.

The enzyme catalyses (2E,6E)-farnesyl diphosphate = delta-selinene + diphosphate. It catalyses the reaction (2E)-geranyl diphosphate = beta-myrcene + diphosphate. The catalysed reaction is (2E)-geranyl diphosphate = (4S)-limonene + diphosphate. It carries out the reaction (2E,6E)-farnesyl diphosphate + H2O = selina-6-en-4-ol + diphosphate. The protein operates within secondary metabolite biosynthesis; terpenoid biosynthesis. Functionally, involved in sesquiterpene olefins biosynthesis, constituants of cannabinoids and terpenoids-rich resins. Catalyzes mainly the conversion of (2E)-farnesyl diphosphate to delta-selinene, and also produces minor products such as selina-6-en-4-ol. Can also use (2E)-geranyl diphosphate as substrate with low efficiency, producing minor amounts of myrcene and limonene. The protein is Delta-selinene synthase TPS7FN of Cannabis sativa (Hemp).